The chain runs to 383 residues: Queuine tRNA-ribosyltransferase (383 aa).

The active-site Proton acceptor is aspartate 90. Substrate contacts are provided by residues 90 to 94 (DSGGF), aspartate 144, glutamine 193, and glycine 227. The segment at 258–264 (GVGTPED) is RNA binding. Aspartate 277 acts as the Nucleophile in catalysis. Positions 282 to 286 (TRNAR) are RNA binding; important for wobble base 34 recognition. 4 residues coordinate Zn(2+): cysteine 315, cysteine 317, cysteine 320, and histidine 346.

Belongs to the queuine tRNA-ribosyltransferase family. In terms of assembly, homodimer. Within each dimer, one monomer is responsible for RNA recognition and catalysis, while the other monomer binds to the replacement base PreQ1. The cofactor is Zn(2+).

The catalysed reaction is 7-aminomethyl-7-carbaguanine + guanosine(34) in tRNA = 7-aminomethyl-7-carbaguanosine(34) in tRNA + guanine. Its pathway is tRNA modification; tRNA-queuosine biosynthesis. Its function is as follows. Catalyzes the base-exchange of a guanine (G) residue with the queuine precursor 7-aminomethyl-7-deazaguanine (PreQ1) at position 34 (anticodon wobble position) in tRNAs with GU(N) anticodons (tRNA-Asp, -Asn, -His and -Tyr). Catalysis occurs through a double-displacement mechanism. The nucleophile active site attacks the C1' of nucleotide 34 to detach the guanine base from the RNA, forming a covalent enzyme-RNA intermediate. The proton acceptor active site deprotonates the incoming PreQ1, allowing a nucleophilic attack on the C1' of the ribose to form the product. After dissociation, two additional enzymatic reactions on the tRNA convert PreQ1 to queuine (Q), resulting in the hypermodified nucleoside queuosine (7-(((4,5-cis-dihydroxy-2-cyclopenten-1-yl)amino)methyl)-7-deazaguanosine). This chain is Queuine tRNA-ribosyltransferase, found in Ralstonia nicotianae (strain ATCC BAA-1114 / GMI1000) (Ralstonia solanacearum).